A 453-amino-acid polypeptide reads, in one-letter code: Probable acetylornithine aminotransferase, mitochondrial (453 aa).

Residue K302 is modified to N6-(pyridoxal phosphate)lysine.

The protein belongs to the class-III pyridoxal-phosphate-dependent aminotransferase family. Pyridoxal 5'-phosphate is required as a cofactor.

It localises to the mitochondrion matrix. It catalyses the reaction N(2)-acetyl-L-ornithine + 2-oxoglutarate = N-acetyl-L-glutamate 5-semialdehyde + L-glutamate. It participates in amino-acid biosynthesis; L-arginine biosynthesis; N(2)-acetyl-L-ornithine from L-glutamate: step 4/4. This is Probable acetylornithine aminotransferase, mitochondrial (argD) from Dictyostelium discoideum (Social amoeba).